Reading from the N-terminus, the 1243-residue chain is Probable phospholipid-transporting ATPase 7 (1243 aa).

The Cytoplasmic segment spans residues 1 to 74 (MGRRRIRSRI…TTRYNLITFL (74 aa)). Residues 75–96 (PKCLYEQFHRVANFYFLVAAIL) traverse the membrane as a helical segment. Residues 97-100 (SVFP) lie on the Extracellular side of the membrane. A helical membrane pass occupies residues 101 to 123 (LSPFNKWSMIAPLIFVVGLSMGK). At 124–305 (EALEDWRRFM…SRIEKRMDYI (182 aa)) the chain is on the cytoplasmic side. Residues 306-327 (IYTLFALLVLVSFISSLGFAVM) form a helical membrane-spanning segment. The Extracellular portion of the chain corresponds to 328–359 (TKMHMGDWWYLRPDKPERLTNPRNPFHAWVVH). A helical transmembrane segment spans residues 360-377 (LITAVLLYGYLIPISLYV). Residues 378–941 (SIELVKVLQA…HGHWCYKRIA (564 aa)) lie on the Cytoplasmic side of the membrane. Catalysis depends on aspartate 425, which acts as the 4-aspartylphosphate intermediate. Lysine 623 is covalently cross-linked (Glycyl lysine isopeptide (Lys-Gly) (interchain with G-Cter in ubiquitin)). Mg(2+) is bound by residues aspartate 886 and aspartate 890. The chain crosses the membrane as a helical span at residues 942–961 (QMICYFFYKNITFGLTLFYF). Residues 962–975 (EAFTGFSGQAIYND) lie on the Extracellular side of the membrane. A helical transmembrane segment spans residues 976-995 (SYLLLFNVILTSLPVIALGV). Residues 996 to 1025 (FEQDVSSEVCLQFPALYQQGPKNLFFDWYR) are Cytoplasmic-facing. Residues 1026–1048 (IIGWMANGVYASVVIFSLNIGIF) form a helical membrane-spanning segment. The Extracellular portion of the chain corresponds to 1049–1061 (HVQSFCSGGQTAD). The chain crosses the membrane as a helical span at residues 1062-1084 (MDAMGTAMFTCIIWAVNVQIALT). Topologically, residues 1085-1090 (MSHFTW) are cytoplasmic. The chain crosses the membrane as a helical span at residues 1091–1111 (IQHVLIWGSIVTWYIFLALFG). Topologically, residues 1112–1128 (MLPPKVSGNIFHMLSET) are extracellular. Residues 1129-1153 (LAPAPIFWLTSLLVIAATTLPYLAY) traverse the membrane as a helical segment. Topologically, residues 1154-1243 (ISFQRSLNPL…TDTTSTTQHS (90 aa)) are cytoplasmic.

Belongs to the cation transport ATPase (P-type) (TC 3.A.3) family. Type IV subfamily.

The protein localises to the cell membrane. The protein resides in the endomembrane system. It carries out the reaction ATP + H2O + phospholipidSide 1 = ADP + phosphate + phospholipidSide 2.. Its function is as follows. Involved in transport of phospholipids and in regulation of pollen plasma membrane lipid asymmetry. The sequence is that of Probable phospholipid-transporting ATPase 7 from Arabidopsis thaliana (Mouse-ear cress).